We begin with the raw amino-acid sequence, 307 residues long: Woronin sorting complex protein (307 aa).

The next 3 helical transmembrane spans lie at 106 to 125 (MATY…IWIL), 146 to 167 (NLIV…IAGA), and 207 to 227 (AWMP…NYIT). Basic and acidic residues predominate over residues 241–264 (GDGAHGDHRHDRERERDRERERHS). Residues 241–307 (GDGAHGDHRH…YPSLGQNPRY (67 aa)) form a disordered region. The segment covering 266-278 (PPHGHGPSHGGRP) has biased composition (low complexity).

It belongs to the peroxisomal membrane protein PXMP2/4 family. As to quaternary structure, self-assembles into detergent-resistant oligomers and forms a complex with hex-1 assemblies.

The protein resides in the peroxisome membrane. It localises to the cell septum. In terms of biological role, woronin sorting complex protein involved in both Woronin bodies (WB) formation and inherence. Localizes to large peroxisome membranes where it self-assembles into detergent-resistant oligomers that envelop hex-1 assemblies, producing asymmetrical nascent WBs. These structures are then delivered to the cell cortex, which permits partitioning of the nascent WB and WB inheritance. The sequence is that of Woronin sorting complex protein from Neurospora crassa (strain ATCC 24698 / 74-OR23-1A / CBS 708.71 / DSM 1257 / FGSC 987).